The following is a 361-amino-acid chain: Homeobox protein knotted-1-like 6 (361 aa).

Positions 11-48 (VGASGVHGGHQHQHHHHPWGSSLSAIVAPPPPPQLQQQ) are disordered. Residues 19-28 (GHQHQHHHHP) are compositionally biased toward basic residues. In terms of domain architecture, ELK spans 242–262 (ELKHHLLKKYSGYLSSLKQEL). The segment at residues 263–326 (SKKKKKGKLP…NQRKRHWKPS (64 aa)) is a DNA-binding region (homeobox; TALE-type).

Belongs to the TALE/KNOX homeobox family. Interacts with FTIP7. As to expression, expressed predominantly in shoot apices. Also found to a lesser extent in glumes.

The protein localises to the nucleus. It is found in the cytoplasm. Functionally, transcription factor that regulates genes involved in development. May be involved in shoot formation during embryogenesis. Overexpression in transgenic plants causes altered leaf morphology. Regulates anther dehiscence via direct repression of the auxin biosynthetic gene YUCCA4. Binds to the DNA sequence 5'-TGAC-3' in the promoter of the YUCCA4 gene and represses its activity during anther development. Reduction of auxin levels at late stage of anther development, after meiosis of microspore mother cells, is necessary for normal anther dehiscence and seed setting. This Oryza sativa subsp. japonica (Rice) protein is Homeobox protein knotted-1-like 6 (OSH1).